The primary structure comprises 352 residues: C-X-C chemokine receptor type 4 (352 aa).

Residues 1–21 form an important for chemokine binding and signaling region; it reads MEGISIYTSDNYTEEMGSGDY. Topologically, residues 1 to 38 are extracellular; it reads MEGISIYTSDNYTEEMGSGDYDSIKEPCFREENAHFNR. Residue Y7 is modified to Sulfotyrosine. A glycan (N-linked (GlcNAc...) asparagine) is linked at N11. Residue Y12 is modified to Sulfotyrosine. Residue S18 is glycosylated (O-linked (Xyl...) (chondroitin sulfate) serine). Y21 bears the Sulfotyrosine mark. 2 cysteine pairs are disulfide-bonded: C28-C274 and C109-C186. A helical transmembrane segment spans residues 39–63; that stretch reads IFLPTIYSIIFLTGIVGNGLVILVM. Residues 64 to 77 lie on the Cytoplasmic side of the membrane; sequence GYQKKLRSMTDKYR. A helical transmembrane segment spans residues 78–99; sequence LHLSVADLLFVITLPFWAVDAV. Positions 94–97 are chemokine binding; it reads WAVD. At 100–110 the chain is on the extracellular side; that stretch reads ANWYFGNFLCK. A helical transmembrane segment spans residues 111 to 130; the sequence is AVHVIYTVNLYSSVLILAFI. Residues 113–117 are chemokine binding; the sequence is HVIYT. The Cytoplasmic segment spans residues 131–154; that stretch reads SLDRYLAIVHATNSQRPRKLLAEK. An Important for signaling motif is present at residues 133–135; it reads DRY. The tract at residues 135-147 is involved in dimerization; when bound to chemokine; that stretch reads YLAIVHATNSQRP. Residues 155-174 traverse the membrane as a helical segment; it reads VVYVGVWIPALLLTIPDFIF. Residues 175-195 lie on the Extracellular side of the membrane; it reads ASVSEADDRYICDRFYPNDLW. The segment at 186–190 is chemokine binding, important for signaling; sequence CDRFY. Residues 191 to 210 are involved in dimerization; the sequence is PNDLWVVVFQFQHIMVGLIL. A helical membrane pass occupies residues 196–216; that stretch reads VVVFQFQHIMVGLILPGIVIL. At 217-241 the chain is on the cytoplasmic side; it reads SCYCIIISKLSHSKGHQKRKALKTT. A helical transmembrane segment spans residues 242–261; sequence VILILAFFACWLPYYIGISI. At 262–282 the chain is on the extracellular side; that stretch reads DSFILLEIIKQGCEFENTVHK. An involved in dimerization region spans residues 266–268; that stretch reads LLE. The chain crosses the membrane as a helical span at residues 283-302; sequence WISITEALAFFHCCLNPILY. The Cytoplasmic portion of the chain corresponds to 303-352; it reads AFLGAKFKTSAQHALTSVSRGSSLKILSKGKRGGHSSVSTESESSSFHSS. Residues S319 and S321 each carry the phosphoserine modification. Phosphoserine; by PKC and GRK6 occurs at positions 324 and 325. Residues 329–352 form a disordered region; it reads LSKGKRGGHSSVSTESESSSFHSS. A Phosphoserine; by GRK6 modification is found at S330. Residue K331 forms a Glycyl lysine isopeptide (Lys-Gly) (interchain with G-Cter in ubiquitin) linkage. Over residues 337–352 the composition is skewed to low complexity; sequence HSSVSTESESSSFHSS. The residue at position 339 (S339) is a Phosphoserine; by GRK6. A phosphoserine mark is found at S348 and S351.

The protein belongs to the G-protein coupled receptor 1 family. Monomer. Can form homodimers. Interacts with CD164. Interacts with ARRB2; the interaction is dependent on the C-terminal phosphorylation of CXCR4 and allows activation of MAPK1 and MAPK3. Interacts with ARR3; the interaction is dependent on the C-terminal phosphorylation of CXCR4 and modulates calcium mobilization. Interacts with RNF113A; the interaction, enhanced by CXCL12, promotes CXCR4 ubiquitination and subsequent degradation. Interacts (via the cytoplasmic C-terminal) with ITCH (via the WW domains I and II); the interaction, enhanced by CXCL12, promotes CXCR4 ubiquitination and leads to its degradation. Interacts with extracellular ubiquitin. Interacts with DBN1; this interaction is enhanced by antigenic stimulation. Following LPS binding, may form a complex with GDF5, HSP90AA1 and HSPA8. In terms of processing, phosphorylated on agonist stimulation. Rapidly phosphorylated on serine and threonine residues in the C-terminal. Phosphorylation at Ser-324 and Ser-325 leads to recruitment of ITCH, ubiquitination and protein degradation. Post-translationally, ubiquitinated after ligand binding, leading to its degradation. Ubiquitinated by ITCH at the cell membrane on agonist stimulation. The ubiquitin-dependent mechanism, endosomal sorting complex required for transport (ESCRT), then targets CXCR4 for lysosomal degradation. This process is dependent also on prior Ser-/Thr-phosphorylation in the C-terminal of CXCR4. Also binding of ARRB1 to STAM negatively regulates CXCR4 sorting to lysosomes though modulating ubiquitination of SFR5S. Sulfation is required for efficient binding of CXCL12/SDF-1alpha and promotes its dimerization. In terms of processing, O- and N-glycosylated. N-glycosylation can mask coreceptor function. The O-glycosylation chondroitin sulfate attachment does not affect interaction with CXCL12/SDF-1alpha nor its coreceptor activity.

It localises to the cell membrane. Its subcellular location is the cell junction. The protein resides in the early endosome. The protein localises to the late endosome. It is found in the lysosome. Receptor for the C-X-C chemokine CXCL12/SDF-1 that transduces a signal by increasing intracellular calcium ion levels and enhancing MAPK1/MAPK3 activation. Involved in the AKT signaling cascade. Plays a role in regulation of cell migration, e.g. during wound healing. Acts as a receptor for extracellular ubiquitin; leading to enhanced intracellular calcium ions and reduced cellular cAMP levels. Binds bacterial lipopolysaccharide (LPS) et mediates LPS-induced inflammatory response, including TNF secretion by monocytes. Involved in hematopoiesis and in cardiac ventricular septum formation. Also plays an essential role in vascularization of the gastrointestinal tract, probably by regulating vascular branching and/or remodeling processes in endothelial cells. Involved in cerebellar development. In the CNS, could mediate hippocampal-neuron survival. In Papio anubis (Olive baboon), this protein is C-X-C chemokine receptor type 4 (CXCR4).